Here is a 506-residue protein sequence, read N- to C-terminus: Maturase K (506 aa).

This sequence belongs to the intron maturase 2 family. MatK subfamily.

It localises to the plastid. The protein resides in the chloroplast. Its function is as follows. Usually encoded in the trnK tRNA gene intron. Probably assists in splicing its own and other chloroplast group II introns. The polypeptide is Maturase K (Trifolium fragiferum (Strawberry clover)).